Consider the following 1526-residue polypeptide: Cell wall protein IFF4 (1526 aa).

The N-terminal stretch at 1-20 (MKFLQKFIITVALLTNIVFA) is a signal peptide. N-linked (GlcNAc...) asparagine glycosylation is found at N93 and N498. Residues 512–541 (SSAGGSSFPEETHMLQTSDSDLSSTAGSES) form a disordered region. A compositionally biased stretch (polar residues) spans 525–541 (MLQTSDSDLSSTAGSES). A glycan (N-linked (GlcNAc...) asparagine) is linked at N637. The interval 1180-1207 (WNGAKSDSPHTSESDITSQYNSHSTSVA) is disordered. Residues 1193 to 1207 (SDITSQYNSHSTSVA) are compositionally biased toward polar residues. Residues N1451, N1463, N1479, N1502, and N1506 are each glycosylated (N-linked (GlcNAc...) asparagine). The tract at residues 1455-1483 (SSVSGYPTNRSDSNGYANTPTTGSNTSGD) is disordered. Residue N1502 is the site of GPI-anchor amidated asparagine attachment. Residues 1503–1526 (GSTNISNKYLKFLGTVVSILILLI) constitute a propeptide, removed in mature form.

It belongs to the HYR1/IFF family. The GPI-anchor is attached to the protein in the endoplasmic reticulum and serves to target the protein to the cell surface. There, the glucosamine-inositol phospholipid moiety is cleaved off and the GPI-$modified mannoprotein is covalently attached via its lipidless GPI glycan remnant to the 1,6-beta-glucan of the outer cell wall layer.

It is found in the secreted. The protein localises to the cell wall. It localises to the membrane. GPI-anchored cell wall protein involved in cell wall organization, hyphal growth, as well as in host-fungal interaction and virulence. Plays a role in adherence to plastic and to host epithelial cells. Promotes the tissue fungal burden during murine vaginal candidiasis. Also increases susceptibility to neutrophil-mediated killing. Furthermore, contributes to the severity of hematogenously disseminated candidiasis in normal mice, but not in neutropenic mice. The polypeptide is Cell wall protein IFF4 (IFF4) (Candida albicans (strain SC5314 / ATCC MYA-2876) (Yeast)).